We begin with the raw amino-acid sequence, 827 residues long: Xanthomonalisin (827 aa).

The first 23 residues, Met-1–Ala-23, serve as a signal peptide directing secretion. A propeptide spans Glu-24–Ala-237 (removed in mature form). In terms of domain architecture, Peptidase S53 spans Ala-241–Asn-625. Active-site charge relay system residues include Glu-312, Asp-316, and Ser-544. Ca(2+) is bound by residues Asp-585, Val-586, Ala-601, Gly-603, and Asp-605. A PKD domain is found at Thr-635–Gly-722. Residues Asn-636–Asn-827 constitute a propeptide, removed in mature form.

The cofactor is Ca(2+). Autocatalytically processed.

The protein resides in the secreted. The enzyme catalyses Cleavage of casein.. Its activity is regulated as follows. Inhibited by 1,2-epoxy-3-(p-nitrophenoxy)propane (EPNP), but not by pepstatin, pepstatin Ac (S-PI) and diazoacetyl-DL-norleucine methyl ester (DAN). Not inhibited by metal ions. Its function is as follows. Pepstatin-insensitive serine-carboxyl proteinase. Shows activity on acid-denatured hemoglobin and on casein. The protein is Xanthomonalisin of Xanthomonas sp. (strain T-22).